The chain runs to 333 residues: Ketol-acid reductoisomerase (NADP(+)) (333 aa).

The 179-residue stretch at M1 to T179 folds into the KARI N-terminal Rossmann domain. NADP(+) contacts are provided by residues Y22–Q25, K45, S48, S50, and D80–Q83. The active site involves H105. An NADP(+)-binding site is contributed by G131. Positions T180 to V325 constitute a KARI C-terminal knotted domain. Positions 188, 192, 224, and 228 each coordinate Mg(2+). S249 contributes to the substrate binding site.

Belongs to the ketol-acid reductoisomerase family. Mg(2+) is required as a cofactor.

It carries out the reaction (2R)-2,3-dihydroxy-3-methylbutanoate + NADP(+) = (2S)-2-acetolactate + NADPH + H(+). The enzyme catalyses (2R,3R)-2,3-dihydroxy-3-methylpentanoate + NADP(+) = (S)-2-ethyl-2-hydroxy-3-oxobutanoate + NADPH + H(+). The protein operates within amino-acid biosynthesis; L-isoleucine biosynthesis; L-isoleucine from 2-oxobutanoate: step 2/4. Its pathway is amino-acid biosynthesis; L-valine biosynthesis; L-valine from pyruvate: step 2/4. Its function is as follows. Involved in the biosynthesis of branched-chain amino acids (BCAA). Catalyzes an alkyl-migration followed by a ketol-acid reduction of (S)-2-acetolactate (S2AL) to yield (R)-2,3-dihydroxy-isovalerate. In the isomerase reaction, S2AL is rearranged via a Mg-dependent methyl migration to produce 3-hydroxy-3-methyl-2-ketobutyrate (HMKB). In the reductase reaction, this 2-ketoacid undergoes a metal-dependent reduction by NADPH to yield (R)-2,3-dihydroxy-isovalerate. The polypeptide is Ketol-acid reductoisomerase (NADP(+)) (Mycobacterium avium).